Here is a 986-residue protein sequence, read N- to C-terminus: Replication factor C subunit 1 (986 aa).

Residues 1 to 95 (MQRGIDSFFK…ALSKLKRHVD (95 aa)) form a disordered region. A phosphoserine mark is found at Ser18, Ser28, Ser40, Ser41, Ser48, and Ser58. Phosphothreonine is present on Thr60. Residues Ser62 and Ser63 each carry the phosphoserine modification. Thr71 carries the post-translational modification Phosphothreonine. 7 positions are modified to phosphoserine: Ser128, Ser137, Ser149, Ser154, Ser156, Ser164, and Ser194. The span at 136 to 147 (ESIKEAAPEKKV) shows a compositional bias: basic and acidic residues. Disordered regions lie at residues 136–203 (ESIK…ERHE) and 317–388 (KQVK…NDVP). The residue at position 197 (Thr197) is a Phosphothreonine. One can recognise a BRCT domain in the interval 232-322 (GSPDCLSGLT…SGIAKQVKEE (91 aa)). Basic and acidic residues-rich tracts occupy residues 317 to 364 (KQVK…EKHD) and 370 to 385 (VKEE…DKLN). 487 to 494 (GPPGIGKT) serves as a coordination point for ATP. The segment at 913–986 (SEAAGADDDY…ASKSKAKAKK (74 aa)) is disordered. The span at 917–932 (GADDDYLDEGPGEEDG) shows a compositional bias: acidic residues. A phosphoserine mark is found at Ser938 and Ser939. Residues 955–959 (KAKKR) carry the Nuclear localization signal motif. Positions 962–979 (TSKASGGSKKATSSTASK) are enriched in low complexity.

It belongs to the activator 1 large subunit family. In terms of assembly, interacts with C-terminus of PCNA.

The protein resides in the nucleus. In terms of biological role, the elongation of primed DNA templates by DNA polymerase delta and epsilon requires the action of the accessory proteins proliferating cell nuclear antigen (PCNA) and activator 1. This subunit binds to the primer-template junction. The polypeptide is Replication factor C subunit 1 (Gnf1) (Drosophila melanogaster (Fruit fly)).